A 587-amino-acid chain; its full sequence is Glutathione hydrolase proenzyme (587 aa).

An N-terminal signal peptide occupies residues 1–28; sequence MKRTWNVCLTALLSVLLVAGSVPFHAEA. The propeptide occupies 29 to 35; the sequence is KKPPKSY. R113 serves as a coordination point for L-glutamate. T403 serves as the catalytic Nucleophile. Residues T421, E423, E442, D445, 464 to 465, and 485 to 486 contribute to the L-glutamate site; these read SS and GG.

The protein belongs to the gamma-glutamyltransferase family. In terms of assembly, this enzyme consists of two polypeptide chains, which are synthesized in precursor form from a single polypeptide. Post-translationally, cleaved by autocatalysis into a large and a small subunit.

The protein resides in the secreted. The catalysed reaction is an N-terminal (5-L-glutamyl)-[peptide] + an alpha-amino acid = 5-L-glutamyl amino acid + an N-terminal L-alpha-aminoacyl-[peptide]. It carries out the reaction glutathione + H2O = L-cysteinylglycine + L-glutamate. The enzyme catalyses an S-substituted glutathione + H2O = an S-substituted L-cysteinylglycine + L-glutamate. The protein operates within sulfur metabolism; glutathione metabolism. Cleaves the gamma-glutamyl bond of extracellular glutathione (gamma-Glu-Cys-Gly), glutathione conjugates, and other gamma-glutamyl compounds. The metabolism of glutathione releases free glutamate and the dipeptide cysteinyl-glycine, which is hydrolyzed to cysteine and glycine by dipeptidases. The chain is Glutathione hydrolase proenzyme (ggt) from Bacillus subtilis (strain 168).